The primary structure comprises 105 residues: uncharacterized protein (105 aa).

Disordered stretches follow at residues 29–55 (HTRVGVTDPDPRVPPLLPGPAGVTDES) and 72–105 (EQRGDRRAVRCEPAGEPPLDDVRTPAAPAVRSGR). The span at 72 to 81 (EQRGDRRAVR) shows a compositional bias: basic and acidic residues.

This is an uncharacterized protein from Streptomyces coelicolor (strain ATCC BAA-471 / A3(2) / M145).